Here is a 183-residue protein sequence, read N- to C-terminus: UPF0316 protein BcerKBAB4_3093 (183 aa).

The next 3 membrane-spanning stretches (helical) occupy residues 6-26, 32-52, and 58-78; these read LIFV…ILLV, SAAG…GIVF, and WMNI…GGYI.

This sequence belongs to the UPF0316 family.

The protein resides in the cell membrane. The polypeptide is UPF0316 protein BcerKBAB4_3093 (Bacillus mycoides (strain KBAB4) (Bacillus weihenstephanensis)).